Reading from the N-terminus, the 93-residue chain is Small ribosomal subunit protein uS19c (93 aa).

The protein belongs to the universal ribosomal protein uS19 family.

It localises to the plastid. Its subcellular location is the chloroplast. Protein S19 forms a complex with S13 that binds strongly to the 16S ribosomal RNA. The chain is Small ribosomal subunit protein uS19c from Tetradesmus obliquus (Green alga).